The chain runs to 869 residues: Aminopeptidase N (869 aa).

Residues Glu-122 and 262–266 (GAMEN) contribute to the substrate site. Residue His-298 coordinates Zn(2+). Catalysis depends on Glu-299, which acts as the Proton acceptor. The Zn(2+) site is built by His-302 and Glu-321.

The protein belongs to the peptidase M1 family. It depends on Zn(2+) as a cofactor.

The protein resides in the cell inner membrane. It carries out the reaction Release of an N-terminal amino acid, Xaa-|-Yaa- from a peptide, amide or arylamide. Xaa is preferably Ala, but may be most amino acids including Pro (slow action). When a terminal hydrophobic residue is followed by a prolyl residue, the two may be released as an intact Xaa-Pro dipeptide.. Functionally, aminopeptidase N is involved in the degradation of intracellular peptides generated by protein breakdown during normal growth as well as in response to nutrient starvation. The sequence is that of Aminopeptidase N (pepN) from Haemophilus influenzae (strain ATCC 51907 / DSM 11121 / KW20 / Rd).